Reading from the N-terminus, the 633-residue chain is DNA topoisomerase 1 (633 aa).

The 110-residue stretch at 6–115 folds into the Toprim domain; sequence KKYIVVESPA…KNRIVFSEIT (110 aa). Residues E12 and D84 each contribute to the Mg(2+) site. The 414-residue stretch at 130 to 543 folds into the Topo IA-type catalytic domain; it reads DMKKVRAQLA…EFYESFSSVF (414 aa). Residues 164-169 are interaction with DNA; sequence SAGRVQ. Catalysis depends on Y288, which acts as the O-(5'-phospho-DNA)-tyrosine intermediate. Intrachain disulfides connect C559–C578 and C561–C580. A C4-type zinc finger spans residues 559 to 580; the sequence is CSCGKEMRLSFGKYGFYLKCEC. The interval 601–633 is disordered; that stretch reads LGRKDSESGSPDGRSVEGKGNLSEKRRKGKKGS.

Belongs to the type IA topoisomerase family. In terms of assembly, monomer. It depends on Mg(2+) as a cofactor.

The enzyme catalyses ATP-independent breakage of single-stranded DNA, followed by passage and rejoining.. Its function is as follows. Releases the supercoiling and torsional tension of DNA, which is introduced during the DNA replication and transcription, by transiently cleaving and rejoining one strand of the DNA duplex. Introduces a single-strand break via transesterification at a target site in duplex DNA. The scissile phosphodiester is attacked by the catalytic tyrosine of the enzyme, resulting in the formation of a DNA-(5'-phosphotyrosyl)-enzyme intermediate and the expulsion of a 3'-OH DNA strand. The free DNA strand then undergoes passage around the unbroken strand, thus removing DNA supercoils. Finally, in the religation step, the DNA 3'-OH attacks the covalent intermediate to expel the active-site tyrosine and restore the DNA phosphodiester backbone. This chain is DNA topoisomerase 1, found in Thermotoga maritima (strain ATCC 43589 / DSM 3109 / JCM 10099 / NBRC 100826 / MSB8).